A 242-amino-acid polypeptide reads, in one-letter code: MRPLTMSGHFLLAPIPESSSDYLLPKDIKLAVLGAGCVGKSAMIVRFLTKRFIGDYEPNTGKLYSRLVYVEGDQLSLQIQDTPGGIQAQDSLSQMVDSLTKSVHWAEGFLLVYSITDYESYQSIRPLYQHIRKVHPDGKAPIFIVGNKGDLLHARQVQTHEGLQLANELGSLFLEISTSENYEDVCDVFQHLCKEVIKVHRLGGERRRASVIPRPRSPNMQDLKRRFRQALSSKAKASSALG.

Residues 17 to 241 (ESSSDYLLPK…SSKAKASSAL (225 aa)) are small GTPase-like. GTP-binding positions include 34–41 (GAGCVGKS), 81–88 (DTPGGIQA), and 147–150 (NKGD).

This sequence belongs to the small GTPase superfamily. Ras family. Interacts with UBF/UBTF.

The protein localises to the nucleus. It localises to the nucleolus. It carries out the reaction GTP + H2O = GDP + phosphate + H(+). Functionally, regulator of rDNA transcription. Acts in cooperation UBF/UBTF and positively regulates RNA polymerase I transcription. The sequence is that of Ras-like protein family member 11A from Mus musculus (Mouse).